The following is a 349-amino-acid chain: Protein AMBP (349 aa).

A signal peptide spans 1-19; sequence MLGLGTLFLLLAACPASRA. An N-linked (GlcNAc...) asparagine glycan is attached at Asn-35. 3-hydroxy-L-kynurenine-binding residues include Cys-52 and Lys-110. A disulfide bond links Cys-90 and Cys-187. Residue Asn-114 is glycosylated (N-linked (GlcNAc...) asparagine). 2 residues coordinate 3-hydroxy-L-kynurenine: Lys-136 and Lys-148. Ser-214 is a glycosylation site (O-linked (Xyl...) (chondroitin sulfate) serine). 6 disulfide bridges follow: Cys-230–Cys-280, Cys-239–Cys-263, Cys-255–Cys-276, Cys-286–Cys-336, Cys-295–Cys-319, and Cys-311–Cys-332. 2 consecutive BPTI/Kunitz inhibitor domains span residues 230 to 280 and 286 to 336; these read CQLS…LQTC and CSLP…KEYC.

In the N-terminal section; belongs to the calycin superfamily. Lipocalin family. As to quaternary structure, monomer. Homodimer. In plasma, it occurs as a monomer or dimer and in covalently-linked complexes with immunoglobulin A (IgA), ALB/albumin and F2/prothrombin. Chromophore-bound alpha-1-microglobulin interacts with the constant region of immunoglobulin A. Chromophore-bound alpha-1-microglobulin interacts with ALB with molar ratio 2:1 and 1:1; this interaction does not prevent fatty acid binding to ALB. Interacts with F2/prothrombin (via N-terminus) with molar ratio 2:1 and 1:1; this interaction does not prevent the activation of prothrombin to thrombin. Interacts with NDUFAB1, a subunit of mitochondrial complex I. Interacts with FN1. I-alpha-I plasma protease inhibitors are assembled from one or two heavy chains (HC) and one light chain, bikunin. Inter-alpha-inhibitor (I-alpha-I) is composed of ITIH1/HC1, ITIH2/HC2 and bikunin, and pre-alpha-inhibitor (P-alpha-I) of ITIH3/HC3 and bikunin. Interacts with TNFAIP6 (via Link domain). In terms of assembly, monomer. Also occurs as a complex with tryptase in mast cells. The precursor is proteolytically processed into separately functioning proteins. In terms of processing, 3-hydroxykynurenine, an oxidized tryptophan metabolite that is common in biological fluids, reacts with Cys-53, Lys-111, Lys-137, and Lys-149 to form heterogeneous polycyclic chromophores including hydroxanthommatin. The reaction by alpha-1-microglobulin is autocatalytic; the human protein forms chromophore even when expressed in insect and bacterial cells. The chromophore can react with accessible cysteines forming non-reducible thioether cross-links with other molecules of alpha-1-microglobulin or with other proteins such as Ig alpha-1 chain C region 'Cys-352'. Post-translationally, heavy chains are interlinked with bikunin via a chondroitin 4-sulfate bridge to the C-terminal aspartate. Proteolytically cleaved by PRSS3 at Kunitz domain 2. As to expression, expressed by the liver and secreted in plasma.

The protein localises to the secreted. It is found in the endoplasmic reticulum. Its subcellular location is the cytoplasm. The protein resides in the cytosol. It localises to the cell membrane. The protein localises to the nucleus membrane. It is found in the mitochondrion inner membrane. Its subcellular location is the extracellular space. The protein resides in the extracellular matrix. Antioxidant and tissue repair protein with reductase, heme-binding and radical-scavenging activities. Removes and protects against harmful oxidants and repairs macromolecules in intravascular and extravascular spaces and in intracellular compartments. Intravascularly, plays a regulatory role in red cell homeostasis by preventing heme- and reactive oxygen species-induced cell damage. Binds and degrades free heme to protect fetal and adult red blood cells from hemolysis. Reduces extracellular methemoglobin, a Fe3+ (ferric) form of hemoglobin that cannot bind oxygen, back to the Fe2+ (ferrous) form deoxyhemoglobin, which has oxygen-carrying potential. Upon acute inflammation, inhibits oxidation of low-density lipoprotein particles by MPO and limits vascular damage. Extravascularly, protects from oxidation products formed on extracellular matrix structures and cell membranes. Catalyzes the reduction of carbonyl groups on oxidized collagen fibers and preserves cellular and extracellular matrix ultrastructures. Importantly, counteracts the oxidative damage at blood-placenta interface, preventing leakage of free fetal hemoglobin into the maternal circulation. Intracellularly, has a role in maintaining mitochondrial redox homeostasis. Bound to complex I of the respiratory chain of mitochondria, may scavenge free radicals and preserve mitochondrial ATP synthesis. Protects renal tubule epithelial cells from heme-induced oxidative damage to mitochondria. Reduces cytochrome c from Fe3+ (ferric) to the Fe2+ (ferrous) state through formation of superoxide anion radicals in the presence of ascorbate or NADH/NADPH electron donor cofactors, ascorbate being the preferred cofactor. Has a chaperone role in facilitating the correct folding of bikunin in the endoplasmic reticulum compartment. Functionally, kunitz-type serine protease inhibitor and structural component of extracellular matrix with a role in extracellular space remodeling and cell adhesion. Among others, has antiprotease activity toward kallikrein, a protease involved in airway inflammation; inhibits GZMK/granzyme, a granule-stored serine protease involved in NK and T cell cytotoxic responses; and inhibits PLG/plasmin, a protease required for activation of matrix metalloproteinases. As part of I-alpha-I complex, provides for the heavy chains to be transferred from I-alpha-I complex to hyaluronan in the presence of TNFAIP6, in a dynamic process that releases free bikunin and remodels extracellular matrix proteoglycan structures. Free bikunin, but not its heavy chain-bound form, acts as a potent protease inhibitor in airway secretions. Part of hyaluronan-rich extracellular matrix that surrounds oocyte during cumulus oophorus expansion, an indispensable process for proper ovulation. Also inhibits calcium oxalate crystallization. Its function is as follows. Kunitz-type serine protease inhibitor. Has high catalytic efficiency for F10/blood coagulation factor Xa and may act as an anticoagulant by inhibiting prothrombin activation. Inhibits trypsin and mast cell CMA1/chymase and tryptase proteases. This is Protein AMBP (AMBP) from Mesocricetus auratus (Golden hamster).